The sequence spans 36 residues: Egg-laying hormone (36 aa).

Residue Lys-36 is modified to Lysine amide.

This sequence belongs to the molluscan ELH family. In terms of tissue distribution, bag cell neurons.

It is found in the secreted. ELH acts as a neurotransmitter locally, upon neurons of the abdominal ganglion and as a hormone by diffusing into the circulating hemolymph and modulating the activity of other organs. It specifically causes contraction of smooth muscle in the ovotestis and expulsion of the egg string. The protein is Egg-laying hormone of Aplysia fasciata (Mottled sea hare).